Reading from the N-terminus, the 334-residue chain is Holliday junction branch migration complex subunit RuvB (334 aa).

The segment at 4–184 (ADRLIQPQLQ…FGIPLRLEFY (181 aa)) is large ATPase domain (RuvB-L). ATP contacts are provided by residues Arg-24, Gly-65, Lys-68, Thr-69, Thr-70, 131–133 (EDY), Arg-174, Tyr-184, and Arg-221. A Mg(2+)-binding site is contributed by Thr-69. Residues 185 to 255 (NVKDLSTIVT…VAEHALDLLD (71 aa)) form a small ATPAse domain (RuvB-S) region. A head domain (RuvB-H) region spans residues 258-334 (GEGFDYMDRK…YLHFGMIKPE (77 aa)). Positions 294, 313, and 318 each coordinate DNA.

The protein belongs to the RuvB family. As to quaternary structure, homohexamer. Forms an RuvA(8)-RuvB(12)-Holliday junction (HJ) complex. HJ DNA is sandwiched between 2 RuvA tetramers; dsDNA enters through RuvA and exits via RuvB. An RuvB hexamer assembles on each DNA strand where it exits the tetramer. Each RuvB hexamer is contacted by two RuvA subunits (via domain III) on 2 adjacent RuvB subunits; this complex drives branch migration. In the full resolvosome a probable DNA-RuvA(4)-RuvB(12)-RuvC(2) complex forms which resolves the HJ.

It is found in the cytoplasm. The catalysed reaction is ATP + H2O = ADP + phosphate + H(+). In terms of biological role, the RuvA-RuvB-RuvC complex processes Holliday junction (HJ) DNA during genetic recombination and DNA repair, while the RuvA-RuvB complex plays an important role in the rescue of blocked DNA replication forks via replication fork reversal (RFR). RuvA specifically binds to HJ cruciform DNA, conferring on it an open structure. The RuvB hexamer acts as an ATP-dependent pump, pulling dsDNA into and through the RuvAB complex. RuvB forms 2 homohexamers on either side of HJ DNA bound by 1 or 2 RuvA tetramers; 4 subunits per hexamer contact DNA at a time. Coordinated motions by a converter formed by DNA-disengaged RuvB subunits stimulates ATP hydrolysis and nucleotide exchange. Immobilization of the converter enables RuvB to convert the ATP-contained energy into a lever motion, pulling 2 nucleotides of DNA out of the RuvA tetramer per ATP hydrolyzed, thus driving DNA branch migration. The RuvB motors rotate together with the DNA substrate, which together with the progressing nucleotide cycle form the mechanistic basis for DNA recombination by continuous HJ branch migration. Branch migration allows RuvC to scan DNA until it finds its consensus sequence, where it cleaves and resolves cruciform DNA. This chain is Holliday junction branch migration complex subunit RuvB, found in Shewanella sp. (strain MR-4).